We begin with the raw amino-acid sequence, 412 residues long: Argininosuccinate synthase (412 aa).

ATP is bound by residues 15–23 (AYSGGLDTS) and alanine 42. 2 residues coordinate L-citrulline: tyrosine 93 and serine 98. Glycine 123 contributes to the ATP binding site. The L-aspartate site is built by threonine 125, asparagine 129, and aspartate 130. Asparagine 129 provides a ligand contact to L-citrulline. Positions 133, 185, 194, 270, and 282 each coordinate L-citrulline.

This sequence belongs to the argininosuccinate synthase family. Type 1 subfamily. In terms of assembly, homotetramer.

Its subcellular location is the cytoplasm. The catalysed reaction is L-citrulline + L-aspartate + ATP = 2-(N(omega)-L-arginino)succinate + AMP + diphosphate + H(+). Its pathway is amino-acid biosynthesis; L-arginine biosynthesis; L-arginine from L-ornithine and carbamoyl phosphate: step 2/3. The polypeptide is Argininosuccinate synthase (Psychrobacter arcticus (strain DSM 17307 / VKM B-2377 / 273-4)).